Here is a 150-residue protein sequence, read N- to C-terminus: uncharacterized protein (150 aa).

It belongs to the Dps family.

This is an uncharacterized protein from Kitasatospora aureofaciens (Streptomyces aureofaciens).